The sequence spans 387 residues: 3-ketoacyl-CoA thiolase (387 aa).

Cys91 functions as the Acyl-thioester intermediate in the catalytic mechanism. Catalysis depends on proton acceptor residues His343 and Cys373.

The protein belongs to the thiolase-like superfamily. Thiolase family. In terms of assembly, heterotetramer of two alpha chains (FadB) and two beta chains (FadA).

It is found in the cytoplasm. The catalysed reaction is an acyl-CoA + acetyl-CoA = a 3-oxoacyl-CoA + CoA. It participates in lipid metabolism; fatty acid beta-oxidation. In terms of biological role, catalyzes the final step of fatty acid oxidation in which acetyl-CoA is released and the CoA ester of a fatty acid two carbons shorter is formed. This Shewanella sp. (strain MR-4) protein is 3-ketoacyl-CoA thiolase.